Here is a 170-residue protein sequence, read N- to C-terminus: Glycine cleavage system H protein, mitochondrial (170 aa).

A mitochondrion-targeting transit peptide spans 1 to 45 (MSLRVVRSVRAVACSLRIALASCPPRPWAPSAAAVRSLRTGSALL). In terms of domain architecture, Lipoyl-binding spans 63–145 (IGTVGISNFA…YEDGWLIKMT (83 aa)). At Lys104 the chain carries N6-lipoyllysine.

Belongs to the GcvH family. In terms of assembly, the glycine cleavage system is composed of four proteins: P (GLDC), T (GCST), L (DLD) and H (GCSH). Interacts with GLDC. It depends on (R)-lipoate as a cofactor.

It is found in the mitochondrion. In terms of biological role, the glycine cleavage system catalyzes the degradation of glycine. The H protein (GCSH) shuttles the methylamine group of glycine from the P protein (GLDC) to the T protein (GCST). Has a pivotal role in the lipoylation of enzymes involved in cellular energetics such as the mitochondrial dihydrolipoyllysine-residue acetyltransferase component of pyruvate dehydrogenase complex (DLAT), and the mitochondrial dihydrolipoyllysine-residue succinyltransferase component of 2-oxoglutarate dehydrogenase complex (DLST). This Rattus norvegicus (Rat) protein is Glycine cleavage system H protein, mitochondrial.